The following is a 451-amino-acid chain: Phosphoglucosamine mutase (451 aa).

The Phosphoserine intermediate role is filled by S102. Residues S102, D243, D245, and D247 each contribute to the Mg(2+) site. S102 is modified (phosphoserine).

It belongs to the phosphohexose mutase family. Mg(2+) serves as cofactor. Activated by phosphorylation.

The catalysed reaction is alpha-D-glucosamine 1-phosphate = D-glucosamine 6-phosphate. In terms of biological role, catalyzes the conversion of glucosamine-6-phosphate to glucosamine-1-phosphate. In Salinispora arenicola (strain CNS-205), this protein is Phosphoglucosamine mutase.